We begin with the raw amino-acid sequence, 83 residues long: MADAAPADVKKLSFERAMEELETIVKRLEDGKVPLEESVAIYERGEALKRRCEELLRQAEARVDKITTDAQGQPVGTEPLDVQ.

This sequence belongs to the XseB family. Heterooligomer composed of large and small subunits.

It localises to the cytoplasm. It catalyses the reaction Exonucleolytic cleavage in either 5'- to 3'- or 3'- to 5'-direction to yield nucleoside 5'-phosphates.. Functionally, bidirectionally degrades single-stranded DNA into large acid-insoluble oligonucleotides, which are then degraded further into small acid-soluble oligonucleotides. The protein is Exodeoxyribonuclease 7 small subunit of Rhodopseudomonas palustris (strain HaA2).